Reading from the N-terminus, the 371-residue chain is Transaldolase (371 aa).

K140 (schiff-base intermediate with substrate) is an active-site residue.

Belongs to the transaldolase family. Type 2 subfamily.

The protein localises to the cytoplasm. The enzyme catalyses D-sedoheptulose 7-phosphate + D-glyceraldehyde 3-phosphate = D-erythrose 4-phosphate + beta-D-fructose 6-phosphate. It functions in the pathway carbohydrate degradation; pentose phosphate pathway; D-glyceraldehyde 3-phosphate and beta-D-fructose 6-phosphate from D-ribose 5-phosphate and D-xylulose 5-phosphate (non-oxidative stage): step 2/3. In terms of biological role, transaldolase is important for the balance of metabolites in the pentose-phosphate pathway. This Arthrobacter sp. (strain FB24) protein is Transaldolase.